The primary structure comprises 157 residues: Protein-export protein SecB (157 aa).

It belongs to the SecB family. Homotetramer, a dimer of dimers. One homotetramer interacts with 1 SecA dimer.

It is found in the cytoplasm. In terms of biological role, one of the proteins required for the normal export of preproteins out of the cell cytoplasm. It is a molecular chaperone that binds to a subset of precursor proteins, maintaining them in a translocation-competent state. It also specifically binds to its receptor SecA. This chain is Protein-export protein SecB, found in Methylobacillus flagellatus (strain ATCC 51484 / DSM 6875 / VKM B-1610 / KT).